The chain runs to 314 residues: Deoxymugineic acid synthase 1-D (314 aa).

A disordered region spans residues 1-21 (MGAGEKTAAGMPRIGMGTAVQ). Asp44 is an NADP(+) binding site. Tyr49 acts as the Proton donor in catalysis. Residue His112 coordinates substrate. NADP(+)-binding positions include 158 to 159 (AN), Gln180, 258 to 266 (FDEARMREN), and 273 to 281 (ELTEEERLR).

This sequence belongs to the aldo/keto reductase family. In terms of tissue distribution, mostly expressed in root tissues, observed, at low levels, in mesocotyl and embryonic roots, seedling roots, crown and seedling leafes, mature bracts, anthers, pistil, caryopsis and embryos.

It carries out the reaction 2'-deoxymugineate + NAD(+) = 3''-deamino-3''-oxonicotianamine + NADH + H(+). It catalyses the reaction 2'-deoxymugineate + NADP(+) = 3''-deamino-3''-oxonicotianamine + NADPH + H(+). Its pathway is siderophore biosynthesis. Its function is as follows. Catalyzes the reduction of a 3''-keto intermediate during the biosynthesis of 2'-deoxymugineic acid (DMA) from L-Met. Involved in the formation of phytosiderophores (MAs) belonging to the mugineic acid family and required to acquire iron. The sequence is that of Deoxymugineic acid synthase 1-D from Triticum aestivum (Wheat).